The following is a 255-amino-acid chain: tRNA (guanine-N(7)-)-methyltransferase (255 aa).

Positions 1–31 are disordered; sequence MMHDDPNEAGLPPHNDAIPDETAEGADEVNP. The span at 18–27 shows a compositional bias: acidic residues; that stretch reads IPDETAEGAD. S-adenosyl-L-methionine contacts are provided by glutamate 86, glutamate 111, aspartate 138, and aspartate 161. Aspartate 161 is an active-site residue. Substrate-binding positions include lysine 165, aspartate 197, and 232–235; that span reads TKFE.

This sequence belongs to the class I-like SAM-binding methyltransferase superfamily. TrmB family.

It catalyses the reaction guanosine(46) in tRNA + S-adenosyl-L-methionine = N(7)-methylguanosine(46) in tRNA + S-adenosyl-L-homocysteine. It participates in tRNA modification; N(7)-methylguanine-tRNA biosynthesis. Its function is as follows. Catalyzes the formation of N(7)-methylguanine at position 46 (m7G46) in tRNA. The chain is tRNA (guanine-N(7)-)-methyltransferase from Burkholderia cenocepacia (strain HI2424).